The primary structure comprises 209 residues: Orotate phosphoribosyltransferase (209 aa).

5-phospho-alpha-D-ribose 1-diphosphate contacts are provided by residues R96, K100, H102, and 122–130 (EDLISTGGS). Position 126 (S126) interacts with orotate.

Belongs to the purine/pyrimidine phosphoribosyltransferase family. PyrE subfamily. As to quaternary structure, homodimer. The cofactor is Mg(2+).

The catalysed reaction is orotidine 5'-phosphate + diphosphate = orotate + 5-phospho-alpha-D-ribose 1-diphosphate. It participates in pyrimidine metabolism; UMP biosynthesis via de novo pathway; UMP from orotate: step 1/2. Functionally, catalyzes the transfer of a ribosyl phosphate group from 5-phosphoribose 1-diphosphate to orotate, leading to the formation of orotidine monophosphate (OMP). The sequence is that of Orotate phosphoribosyltransferase from Streptococcus pyogenes serotype M5 (strain Manfredo).